The following is a 278-amino-acid chain: Myb/SANT-like DNA-binding domain-containing protein 1 (278 aa).

Residues 1-27 (MVRGAGPGPSLSALSHPTGASGMAAAE) are disordered. The Myb-like domain occupies 44 to 129 (RNWTDAEMRG…PDWPYYLAID (86 aa)). The interval 138 to 168 (SCDGKLPDSQPPGPSTSQTEASLSPPAKSTP) is disordered.

The protein is Myb/SANT-like DNA-binding domain-containing protein 1 (MSANTD1) of Homo sapiens (Human).